The chain runs to 574 residues: Streptolysin O (574 aa).

A signal peptide spans 1-36; it reads MKDMSNKKIFKKYSRVAGLLTAALIVGNLVTANADS. Residues 37–52 are compositionally biased toward low complexity; the sequence is NKQNTANTETTTTNEQ. Disordered regions lie at residues 37-64 and 84-111; these read NKQN…TTEK and KEMP…HTEE. Basic and acidic residues predominate over residues 53–64; it reads PKPESSELTTEK. 4 beta stranded membrane passes run 263–276, 283–292, 361–370, and 378–390; these read KSQI…NSKI, IDFKSISKGE, SNDVEAAFSA, and KTNG…LENS. The Conserved undecapeptide motif lies at 532–542; that stretch reads ECTGLAWEWWR. Residues 564 to 565 carry the Cholesterol binding motif; that stretch reads TL.

This sequence belongs to the cholesterol-dependent cytolysin family. As to quaternary structure, homooligomeric pore complex of 35 to 50 subunits; when inserted in the host membrane.

Its subcellular location is the secreted. The protein resides in the host cell membrane. In terms of biological role, a cholesterol-dependent toxin that causes cytolysis by forming pores in cholesterol containing host membranes. After binding to target membranes, the protein undergoes a major conformation change, leading to its insertion in the host membrane and formation of an oligomeric pore complex. Cholesterol is required for binding to host membranes, membrane insertion and pore formation; cholesterol binding is mediated by a Thr-Leu pair in the C-terminus. Can be reversibly inactivated by oxidation. The chain is Streptolysin O (slo) from Streptococcus canis.